We begin with the raw amino-acid sequence, 109 residues long: UPF0060 membrane protein PA14_21660 (109 aa).

Transmembrane regions (helical) follow at residues Leu5 to Leu25, Leu27 to Leu47, Ala59 to Glu79, and Leu84 to Gly104.

This sequence belongs to the UPF0060 family.

The protein resides in the cell inner membrane. This Pseudomonas aeruginosa (strain UCBPP-PA14) protein is UPF0060 membrane protein PA14_21660.